A 475-amino-acid polypeptide reads, in one-letter code: Ankyrin repeat, SAM and basic leucine zipper domain-containing protein 1 (475 aa).

Positions 1–25 (MAAGALRGLPVAGGGESSESEDDGW) are disordered. Residues S17, S18, and S20 each carry the phosphoserine modification. ANK repeat units lie at residues 45–74 (EKKEKFKKAMTIGDVSLVQELLDSGISVDS), 78–107 (YGWTPLMYAASVANAELVRVLLDRGANASF), 110–144 (DKQSILITACSAHGSEELILKCVELLLSRNADPNV), 148–177 (RLMTPIMYAARDGHTQVVALLVAHGAEVNT), 181–210 (NGYTALTWAARQGHKNIVLKLLELGANKML), and 214–243 (DGKMPSEIAKRNKHHEIFNLLSFTLNPLEG). Residues 272-334 (SYTAFGDLEV…KILAALKELQ (63 aa)) enclose the SAM domain.

As to quaternary structure, interacts with DDX4, PIWIL1, RANBP9 and TDRD1.

Its subcellular location is the cytoplasm. Functionally, plays a central role during spermatogenesis by repressing transposable elements and preventing their mobilization, which is essential for the germline integrity. Acts via the piRNA metabolic process, which mediates the repression of transposable elements during meiosis by forming complexes composed of piRNAs and Piwi proteins and governs the methylation and subsequent repression of transposons. Its association with pi-bodies suggests a participation in the primary piRNAs metabolic process. Required prior to the pachytene stage to facilitate the production of multiple types of piRNAs, including those associated with repeats involved in the regulation of retrotransposons. May act by mediating protein-protein interactions during germ cell maturation. The polypeptide is Ankyrin repeat, SAM and basic leucine zipper domain-containing protein 1 (ASZ1) (Nomascus leucogenys (Northern white-cheeked gibbon)).